Reading from the N-terminus, the 331-residue chain is Ferrochelatase (331 aa).

Residues histidine 187 and glutamate 286 each contribute to the Fe cation site.

The protein belongs to the ferrochelatase family.

The protein resides in the cytoplasm. The enzyme catalyses heme b + 2 H(+) = protoporphyrin IX + Fe(2+). Its pathway is porphyrin-containing compound metabolism; protoheme biosynthesis; protoheme from protoporphyrin-IX: step 1/1. In terms of biological role, catalyzes the ferrous insertion into protoporphyrin IX. This is Ferrochelatase from Legionella pneumophila subsp. pneumophila (strain Philadelphia 1 / ATCC 33152 / DSM 7513).